Consider the following 351-residue polypeptide: DNA polymerase IV (351 aa).

The UmuC domain occupies 4-185 (IIHVDMDCFF…LPLAKIPGVG (182 aa)). Mg(2+)-binding residues include aspartate 8 and aspartate 103. The active site involves glutamate 104.

The protein belongs to the DNA polymerase type-Y family. Monomer. It depends on Mg(2+) as a cofactor.

Its subcellular location is the cytoplasm. It catalyses the reaction DNA(n) + a 2'-deoxyribonucleoside 5'-triphosphate = DNA(n+1) + diphosphate. In terms of biological role, poorly processive, error-prone DNA polymerase involved in untargeted mutagenesis. Copies undamaged DNA at stalled replication forks, which arise in vivo from mismatched or misaligned primer ends. These misaligned primers can be extended by PolIV. Exhibits no 3'-5' exonuclease (proofreading) activity. May be involved in translesional synthesis, in conjunction with the beta clamp from PolIII. The protein is DNA polymerase IV of Salmonella choleraesuis (strain SC-B67).